The following is a 476-amino-acid chain: Aspartyl/glutamyl-tRNA(Asn/Gln) amidotransferase subunit B (476 aa).

Belongs to the GatB/GatE family. GatB subfamily. Heterotrimer of A, B and C subunits.

It catalyses the reaction L-glutamyl-tRNA(Gln) + L-glutamine + ATP + H2O = L-glutaminyl-tRNA(Gln) + L-glutamate + ADP + phosphate + H(+). The enzyme catalyses L-aspartyl-tRNA(Asn) + L-glutamine + ATP + H2O = L-asparaginyl-tRNA(Asn) + L-glutamate + ADP + phosphate + 2 H(+). Its function is as follows. Allows the formation of correctly charged Asn-tRNA(Asn) or Gln-tRNA(Gln) through the transamidation of misacylated Asp-tRNA(Asn) or Glu-tRNA(Gln) in organisms which lack either or both of asparaginyl-tRNA or glutaminyl-tRNA synthetases. The reaction takes place in the presence of glutamine and ATP through an activated phospho-Asp-tRNA(Asn) or phospho-Glu-tRNA(Gln). The protein is Aspartyl/glutamyl-tRNA(Asn/Gln) amidotransferase subunit B of Thermosipho melanesiensis (strain DSM 12029 / CIP 104789 / BI429).